Consider the following 505-residue polypeptide: Glutamyl-tRNA(Gln) amidotransferase subunit A, mitochondrial (505 aa).

Active-site charge relay system residues include lysine 76 and serine 158. The Acyl-ester intermediate role is filled by serine 182.

The protein belongs to the amidase family. GatA subfamily. As to quaternary structure, subunit of the heterotrimeric GatCAB amidotransferase (AdT) complex, composed of A, B and C subunits.

It is found in the mitochondrion. The enzyme catalyses L-glutamyl-tRNA(Gln) + L-glutamine + ATP + H2O = L-glutaminyl-tRNA(Gln) + L-glutamate + ADP + phosphate + H(+). Functionally, allows the formation of correctly charged Gln-tRNA(Gln) through the transamidation of misacylated Glu-tRNA(Gln) in the mitochondria. The reaction takes place in the presence of glutamine and ATP through an activated gamma-phospho-Glu-tRNA(Gln). The sequence is that of Glutamyl-tRNA(Gln) amidotransferase subunit A, mitochondrial from Ixodes scapularis (Black-legged tick).